A 225-amino-acid polypeptide reads, in one-letter code: Octanoyltransferase (225 aa).

In terms of domain architecture, BPL/LPL catalytic spans 37 to 217; it reads SDTPDEFWVV…ELASLIGYQT (181 aa). Substrate is bound by residues 76–83, 148–150, and 161–163; these read RGGQVTYH, SLG, and GLA. Catalysis depends on Cys179, which acts as the Acyl-thioester intermediate.

It belongs to the LipB family.

The protein resides in the cytoplasm. It catalyses the reaction octanoyl-[ACP] + L-lysyl-[protein] = N(6)-octanoyl-L-lysyl-[protein] + holo-[ACP] + H(+). It participates in protein modification; protein lipoylation via endogenous pathway; protein N(6)-(lipoyl)lysine from octanoyl-[acyl-carrier-protein]: step 1/2. In terms of biological role, catalyzes the transfer of endogenously produced octanoic acid from octanoyl-acyl-carrier-protein onto the lipoyl domains of lipoate-dependent enzymes. Lipoyl-ACP can also act as a substrate although octanoyl-ACP is likely to be the physiological substrate. The polypeptide is Octanoyltransferase (Aeromonas salmonicida (strain A449)).